Here is a 359-residue protein sequence, read N- to C-terminus: Peptide chain release factor 1 (359 aa).

At Gln235 the chain carries N5-methylglutamine.

Belongs to the prokaryotic/mitochondrial release factor family. Post-translationally, methylated by PrmC. Methylation increases the termination efficiency of RF1.

It is found in the cytoplasm. In terms of biological role, peptide chain release factor 1 directs the termination of translation in response to the peptide chain termination codons UAG and UAA. The polypeptide is Peptide chain release factor 1 (Verminephrobacter eiseniae (strain EF01-2)).